The following is a 426-amino-acid chain: Serine hydroxymethyltransferase (426 aa).

(6S)-5,6,7,8-tetrahydrofolate is bound by residues Leu-122 and 126–128; that span reads GHL. Residue Lys-231 is modified to N6-(pyridoxal phosphate)lysine.

Belongs to the SHMT family. Homodimer. Requires pyridoxal 5'-phosphate as cofactor.

It is found in the cytoplasm. It carries out the reaction (6R)-5,10-methylene-5,6,7,8-tetrahydrofolate + glycine + H2O = (6S)-5,6,7,8-tetrahydrofolate + L-serine. The protein operates within one-carbon metabolism; tetrahydrofolate interconversion. It functions in the pathway amino-acid biosynthesis; glycine biosynthesis; glycine from L-serine: step 1/1. In terms of biological role, catalyzes the reversible interconversion of serine and glycine with tetrahydrofolate (THF) serving as the one-carbon carrier. This reaction serves as the major source of one-carbon groups required for the biosynthesis of purines, thymidylate, methionine, and other important biomolecules. Also exhibits THF-independent aldolase activity toward beta-hydroxyamino acids, producing glycine and aldehydes, via a retro-aldol mechanism. The chain is Serine hydroxymethyltransferase from Koribacter versatilis (strain Ellin345).